The sequence spans 391 residues: Alanine racemase, biosynthetic (391 aa).

The Proton acceptor; specific for D-alanine role is filled by K52. An N6-(pyridoxal phosphate)lysine modification is found at K52. R149 contacts substrate. The active-site Proton acceptor; specific for L-alanine is the Y271. Position 330 (M330) interacts with substrate.

Belongs to the alanine racemase family. The cofactor is pyridoxal 5'-phosphate.

It carries out the reaction L-alanine = D-alanine. It functions in the pathway amino-acid biosynthesis; D-alanine biosynthesis; D-alanine from L-alanine: step 1/1. The protein operates within cell wall biogenesis; peptidoglycan biosynthesis. In terms of biological role, catalyzes the interconversion of L-alanine and D-alanine. Provides the D-alanine required for cell wall biosynthesis. In Agrobacterium fabrum (strain C58 / ATCC 33970) (Agrobacterium tumefaciens (strain C58)), this protein is Alanine racemase, biosynthetic (alr).